Here is a 148-residue protein sequence, read N- to C-terminus: Low molecular weight protein-tyrosine-phosphatase Etp (148 aa).

Residue C13 is the Nucleophile of the active site. R19 is a catalytic residue. D119 functions as the Proton donor in the catalytic mechanism.

It belongs to the low molecular weight phosphotyrosine protein phosphatase family.

The catalysed reaction is O-phospho-L-tyrosyl-[protein] + H2O = L-tyrosyl-[protein] + phosphate. Dephosphorylates etk. The chain is Low molecular weight protein-tyrosine-phosphatase Etp (etp) from Escherichia coli O157:H7.